The primary structure comprises 471 residues: Glutamate--tRNA ligase (471 aa).

Residues 9 to 19 carry the 'HIGH' region motif; sequence PSPTGYLHVGG. Positions 98, 100, 125, and 127 each coordinate Zn(2+). Residues 237 to 241 carry the 'KMSKS' region motif; the sequence is KLSKR. Lys-240 is an ATP binding site.

The protein belongs to the class-I aminoacyl-tRNA synthetase family. Glutamate--tRNA ligase type 1 subfamily. As to quaternary structure, monomer. Requires Zn(2+) as cofactor.

The protein resides in the cytoplasm. It carries out the reaction tRNA(Glu) + L-glutamate + ATP = L-glutamyl-tRNA(Glu) + AMP + diphosphate. Catalyzes the attachment of glutamate to tRNA(Glu) in a two-step reaction: glutamate is first activated by ATP to form Glu-AMP and then transferred to the acceptor end of tRNA(Glu). The sequence is that of Glutamate--tRNA ligase from Enterobacter sp. (strain 638).